The following is a 347-amino-acid chain: GMP reductase (347 aa).

An NADP(+)-binding site is contributed by 108–131; sequence NDFLKLQRILALSPALRFICVDVA. 2 residues coordinate K(+): glycine 181 and glycine 183. Residue cysteine 186 is the Thioimidate intermediate of the active site. 216–239 is an NADP(+) binding site; that stretch reads IVGDGGCTCPGDVAKAFGGGADFV.

Belongs to the IMPDH/GMPR family. GuaC type 1 subfamily. Homotetramer.

It catalyses the reaction IMP + NH4(+) + NADP(+) = GMP + NADPH + 2 H(+). Its function is as follows. Catalyzes the irreversible NADPH-dependent deamination of GMP to IMP. It functions in the conversion of nucleobase, nucleoside and nucleotide derivatives of G to A nucleotides, and in maintaining the intracellular balance of A and G nucleotides. This chain is GMP reductase, found in Tolumonas auensis (strain DSM 9187 / NBRC 110442 / TA 4).